A 154-amino-acid polypeptide reads, in one-letter code: Endoribonuclease YbeY (154 aa).

The Zn(2+) site is built by His-114, His-118, and His-124.

It belongs to the endoribonuclease YbeY family. Zn(2+) is required as a cofactor.

It is found in the cytoplasm. Single strand-specific metallo-endoribonuclease involved in late-stage 70S ribosome quality control and in maturation of the 3' terminus of the 16S rRNA. This Histophilus somni (strain 129Pt) (Haemophilus somnus) protein is Endoribonuclease YbeY.